We begin with the raw amino-acid sequence, 84 residues long: Serine protease inhibitor Kazal-type 2 (84 aa).

The first 23 residues, 1–23, serve as a signal peptide directing secretion; that stretch reads MALSVLRLALLLLAVTFAASLIP. Residue glutamine 24 is modified to Pyrrolidone carboxylic acid. One can recognise a Kazal-like domain in the interval 30 to 84; the sequence is KYRTPNCSQYRLPGCPRHFNPVCGSDMSTYANECTLCMKIREGGHNIKIIRNGPC. Intrachain disulfides connect cysteine 36-cysteine 66, cysteine 44-cysteine 63, and cysteine 52-cysteine 84.

As to expression, expressed in epididymis (at protein level).

Its subcellular location is the secreted. The protein resides in the cytoplasmic vesicle. It localises to the secretory vesicle. The protein localises to the acrosome. Functionally, as a strong inhibitor of acrosin, it is required for normal spermiogenesis. It probably hinders premature activation of proacrosin and other proteases, thus preventing the cascade of events leading to spermiogenesis defects. May be involved in the regulation of serine protease-dependent germ cell apoptosis. It also inhibits trypsin. The sequence is that of Serine protease inhibitor Kazal-type 2 (SPINK2) from Homo sapiens (Human).